Consider the following 156-residue polypeptide: Nascent polypeptide-associated complex subunit beta (156 aa).

Disordered regions lie at residues 1–42 (MPID…KDDT) and 129–156 (QANE…AEVE). One can recognise an NAC-A/B domain in the interval 38–103 (NKDDTKLHNQ…AQEKNLQELF (66 aa)).

The protein belongs to the NAC-beta family. Part of the nascent polypeptide-associated complex (NAC), consisting of EGD2 and EGD1. NAC associates with ribosomes via EGD1.

It is found in the cytoplasm. Its subcellular location is the nucleus. Functionally, component of the nascent polypeptide-associated complex (NAC), a dynamic component of the ribosomal exit tunnel, protecting the emerging polypeptides from interaction with other cytoplasmic proteins to ensure appropriate nascent protein targeting. The NAC complex also promotes mitochondrial protein import by enhancing productive ribosome interactions with the outer mitochondrial membrane and blocks the inappropriate interaction of ribosomes translating non-secretory nascent polypeptides with translocation sites in the membrane of the endoplasmic reticulum. EGD1 may act as a transcription factor that exert a negative effect on the expression of several genes that are transcribed by RNA polymerase II. In Candida glabrata (strain ATCC 2001 / BCRC 20586 / JCM 3761 / NBRC 0622 / NRRL Y-65 / CBS 138) (Yeast), this protein is Nascent polypeptide-associated complex subunit beta (EGD1).